The following is a 536-amino-acid chain: GATA zinc finger domain-containing protein 9 (536 aa).

Polar residues-rich tracts occupy residues 1 to 20 and 36 to 55; these read MTSF…QPHS and CQSS…NPNA. Disordered stretches follow at residues 1-77, 183-211, 237-258, 273-342, and 370-423; these read MTSF…LSGS, SSSL…VVRS, RSAF…GGGS, QLHY…GFVQ, and ALFS…NISS. Low complexity predominate over residues 56–72; that stretch reads TTNNTTTTTTTTTTTTN. Residues 188 to 206 show a composition bias toward acidic residues; the sequence is SEDDDCCYETEEDDNGEDG. Residues 237-247 are compositionally biased toward basic residues; that stretch reads RSAFKKNKKDY. The span at 273-283 shows a compositional bias: polar residues; the sequence is QLHYSNSMTDN. Composition is skewed to low complexity over residues 318-335 and 379-399; these read SNSN…NNNN and PSPT…NSGN. The GATA-type zinc finger occupies 479–504; that stretch reads CRHCGTTDTPEWRRGPDGRKSLCNAC.

In Dictyostelium discoideum (Social amoeba), this protein is GATA zinc finger domain-containing protein 9 (gtaI).